Here is a 913-residue protein sequence, read N- to C-terminus: Protein translocase subunit SecA (913 aa).

ATP is bound by residues glutamine 87, 105-109 (GEGKT), and aspartate 512. Zn(2+) contacts are provided by cysteine 897, cysteine 899, cysteine 908, and histidine 909.

Belongs to the SecA family. In terms of assembly, monomer and homodimer. Part of the essential Sec protein translocation apparatus which comprises SecA, SecYEG and auxiliary proteins SecDF-YajC and YidC. Requires Zn(2+) as cofactor.

It localises to the cell inner membrane. The protein localises to the cytoplasm. It carries out the reaction ATP + H2O + cellular proteinSide 1 = ADP + phosphate + cellular proteinSide 2.. Its function is as follows. Part of the Sec protein translocase complex. Interacts with the SecYEG preprotein conducting channel. Has a central role in coupling the hydrolysis of ATP to the transfer of proteins into and across the cell membrane, serving both as a receptor for the preprotein-SecB complex and as an ATP-driven molecular motor driving the stepwise translocation of polypeptide chains across the membrane. The protein is Protein translocase subunit SecA of Pseudomonas syringae pv. syringae (strain B728a).